The following is a 487-amino-acid chain: MKALDELIFDNRFARLGDAFSTSVLPEPIDAPQLVVASQSALALLDLAPEQADLPLFAEIFSGHKLWSEAEPRAMVYSGHQFGSYNPRLGDGRGLLLGEVYNDAGEHWDLHLKGAGRTPYSRMGDGRAVLRSSIREFLASEVLHALGIPSSRAGCVVSSSTPVWRETQEHAAMVLRLAQSHVRFGSLEYFFYTKQPEQLKTLAEHVLTMHYPHCQEQPEPYLAMFREIVERNAELIAKWQAYGFCHGVMNTDNMSILGITFDFGPFAFLDDFDEHFICNHSDHEGRYSFSNQVPIAQWNLSALAQALTPFISVDALREAIGLFLPLYQAHYLDLMRRRLGLTVAHEQDEQLVSQLLKLMQNSGVDYTLFFRRLGDQPAAEALRTLRDDFVDIKGFDGWAQAYQARIALENNGTEQERQTRMHAVNPLYILRNYLAQNAIAAAEKGDYAEVRRLHQVLCTPFTEQPGMQGYAQRPPDWGKHLEISCSS.

Positions 90, 92, 93, 113, 125, 126, 176, and 183 each coordinate ATP. The Proton acceptor role is filled by Asp-252. Residues Asn-253 and Asp-262 each contribute to the Mg(2+) site. Asp-262 is an ATP binding site.

It belongs to the SELO family. It depends on Mg(2+) as a cofactor. Mn(2+) is required as a cofactor.

The catalysed reaction is L-seryl-[protein] + ATP = 3-O-(5'-adenylyl)-L-seryl-[protein] + diphosphate. It carries out the reaction L-threonyl-[protein] + ATP = 3-O-(5'-adenylyl)-L-threonyl-[protein] + diphosphate. The enzyme catalyses L-tyrosyl-[protein] + ATP = O-(5'-adenylyl)-L-tyrosyl-[protein] + diphosphate. It catalyses the reaction L-histidyl-[protein] + UTP = N(tele)-(5'-uridylyl)-L-histidyl-[protein] + diphosphate. The catalysed reaction is L-seryl-[protein] + UTP = O-(5'-uridylyl)-L-seryl-[protein] + diphosphate. It carries out the reaction L-tyrosyl-[protein] + UTP = O-(5'-uridylyl)-L-tyrosyl-[protein] + diphosphate. Functionally, nucleotidyltransferase involved in the post-translational modification of proteins. It can catalyze the addition of adenosine monophosphate (AMP) or uridine monophosphate (UMP) to a protein, resulting in modifications known as AMPylation and UMPylation. The protein is Protein nucleotidyltransferase YdiU of Pseudomonas syringae pv. syringae (strain B728a).